An 85-amino-acid chain; its full sequence is Small ribosomal subunit protein uS17 (85 aa).

Belongs to the universal ribosomal protein uS17 family. As to quaternary structure, part of the 30S ribosomal subunit.

Its function is as follows. One of the primary rRNA binding proteins, it binds specifically to the 5'-end of 16S ribosomal RNA. The chain is Small ribosomal subunit protein uS17 from Spiroplasma citri.